The chain runs to 274 residues: MAVRKFKPTTPGQRHKIIGTFEEITASVPEKSLVYGKKSSGGRNNEGKMTMRYLGGGHRKVIRIVDFKRNKDGVPAVVKTIEYDPNRSARIALLFYADGEKRYIIAPNGLQVGATLMSGENAAPEIGNALPLQNIPVGTVIHNIELRPGQGAALVRSAGNFAQLTSREGKYCVIKLPSGEVRQILSTCKATIGSVGNSDHGLESSGKAGRSRWQGRRPRNRGVVMNPVDHPMGGGEGRASGGHPRSRKGLYAKGLKTRAPKKQSSKYIIERRKK.

A disordered region spans residues 195–274; sequence VGNSDHGLES…SKYIIERRKK (80 aa). 2 stretches are compositionally biased toward basic residues: residues 209-220 and 244-264; these read GRSRWQGRRPRN and PRSRKGLYAKGLKTRAPKKQS.

The protein belongs to the universal ribosomal protein uL2 family. In terms of assembly, part of the 50S ribosomal subunit. Forms a bridge to the 30S subunit in the 70S ribosome.

Functionally, one of the primary rRNA binding proteins. Required for association of the 30S and 50S subunits to form the 70S ribosome, for tRNA binding and peptide bond formation. It has been suggested to have peptidyltransferase activity; this is somewhat controversial. Makes several contacts with the 16S rRNA in the 70S ribosome. The protein is Large ribosomal subunit protein uL2 of Bacteroides fragilis (strain ATCC 25285 / DSM 2151 / CCUG 4856 / JCM 11019 / LMG 10263 / NCTC 9343 / Onslow / VPI 2553 / EN-2).